Reading from the N-terminus, the 384-residue chain is Outer membrane protein assembly factor BamB (384 aa).

Positions 1–16 (MKIRILVLILCALTQG) are cleaved as a signal peptide. Residue Cys-17 is the site of N-palmitoyl cysteine attachment. Cys-17 is lipidated: S-diacylglycerol cysteine.

The protein belongs to the BamB family. In terms of assembly, part of the Bam complex.

It localises to the cell outer membrane. Its function is as follows. Part of the outer membrane protein assembly complex, which is involved in assembly and insertion of beta-barrel proteins into the outer membrane. The protein is Outer membrane protein assembly factor BamB of Legionella pneumophila (strain Paris).